The following is a 562-amino-acid chain: Lamassu protein LmuB (562 aa).

In terms of biological role, component of antiviral defense system Lamassu type I, composed of LmuA and LmuB. Expression of Lamassu type I in B.subtilis (strain BEST7003) confers resistance to phages phi3T, SpBeta and SPR. May be an ATPase. The sequence is that of Lamassu protein LmuB from Bacillus sp. (strain NCIM 5461 / CCTCC AB 2011126 / NIO-1130).